The chain runs to 302 residues: Protein ECM11 (302 aa).

2 disordered regions span residues 1-67 (MTVI…TDKQ) and 162-187 (SLNGENTSSPAKEKSQEPIENPGSYQ). The segment covering 35–46 (NKPPSSINSRSG) has biased composition (polar residues). A compositionally biased stretch (basic and acidic residues) spans 56–67 (APEKKINNTDKQ). Residues 162-171 (SLNGENTSSP) are compositionally biased toward polar residues.

In terms of assembly, interacts with CDC6.

The protein resides in the nucleus. Its function is as follows. May be involved in cell wall organization and biogenesis. This is Protein ECM11 (ECM11) from Saccharomyces cerevisiae (strain ATCC 204508 / S288c) (Baker's yeast).